Reading from the N-terminus, the 98-residue chain is Protein translation factor SUI1 homolog (98 aa).

Belongs to the SUI1 family.

This is Protein translation factor SUI1 homolog from Pyrococcus furiosus (strain ATCC 43587 / DSM 3638 / JCM 8422 / Vc1).